A 749-amino-acid polypeptide reads, in one-letter code: Cytosolic phospholipase A2 (749 aa).

The phospholipid binding stretch occupies residues 1 to 178 (MSFIDPYQHI…MKKLLGPKNS (178 aa)). Serine 2 is modified (phosphoserine). In terms of domain architecture, C2 spans 6 to 122 (PYQHIIVEHH…KVGEKKQVPF (117 aa)). Residues aspartate 40, threonine 41, aspartate 43, asparagine 65, aspartate 93, alanine 94, and asparagine 95 each contribute to the Ca(2+) site. The PLA2c domain maps to 140–740 (SSPDLRFSMA…SSVEARRFFN (601 aa)). Serine 228 serves as the catalytic Nucleophile. Phosphothreonine is present on threonine 268. Residues 426–458 (AKHIVSNDSSDSDDESQGPKGTEHEEAEREYQN) are disordered. A phosphoserine mark is found at serine 434, serine 435, and serine 437. A compositionally biased stretch (basic and acidic residues) spans 446-457 (GTEHEEAEREYQ). Serine 505 carries the phosphoserine; by MAPK modification. Phosphoserine is present on serine 515. Residue lysine 541 forms a Glycyl lysine isopeptide (Lys-Gly) (interchain with G-Cter in SUMO2) linkage. Aspartate 549 functions as the Proton acceptor in the catalytic mechanism. A Glycyl lysine isopeptide (Lys-Gly) (interchain with G-Cter in SUMO2) cross-link involves residue lysine 606. Residues serine 727 and serine 729 each carry the phosphoserine modification.

In terms of assembly, interacts with KAT5. Phosphorylated at both Ser-505 and Ser-727 in response to mitogenic stimuli. Detected in granulosa cells after stimulation with chorionic gonadotropin (at protein level).

The protein resides in the cytoplasm. It localises to the golgi apparatus membrane. Its subcellular location is the nucleus envelope. It catalyses the reaction a 1,2-diacyl-sn-glycero-3-phosphocholine + H2O = a 1-acyl-sn-glycero-3-phosphocholine + a fatty acid + H(+). The enzyme catalyses a 1-O-alkyl-2-acyl-sn-glycero-3-phosphocholine + H2O = a 1-O-alkyl-sn-glycero-3-phosphocholine + a fatty acid + H(+). It carries out the reaction a 1-acyl-sn-glycero-3-phosphocholine + H2O = sn-glycerol 3-phosphocholine + a fatty acid + H(+). The catalysed reaction is 1-hexadecanoyl-2-(5Z,8Z,11Z,14Z-eicosatetraenoyl)-sn-glycero-3-phosphocholine + H2O = 1-hexadecanoyl-sn-glycero-3-phosphocholine + (5Z,8Z,11Z,14Z)-eicosatetraenoate + H(+). It catalyses the reaction 1,2-di-(5Z,8Z,11Z,14Z-eicosatetraenoyl)-sn-glycero-3-phosphocholine + H2O = 1-(5Z,8Z,11Z,14Z-eicosatetraenoyl)-sn-glycero-3-phosphocholine + (5Z,8Z,11Z,14Z)-eicosatetraenoate + H(+). The enzyme catalyses 1-octadecanoyl-2-(5Z,8Z,11Z,14Z-eicosatetraenoyl)-sn-glycero-3-phosphocholine + H2O = 1-octadecanoyl-sn-glycero-3-phosphocholine + (5Z,8Z,11Z,14Z)-eicosatetraenoate + H(+). It carries out the reaction 1-hexadecanoyl-2-(9Z,12Z-octadecadienoyl)-sn-glycero-3-phosphocholine + H2O = (9Z,12Z)-octadecadienoate + 1-hexadecanoyl-sn-glycero-3-phosphocholine + H(+). The catalysed reaction is 1-octadecanoyl-2-(9Z,12Z,15Z-octadecatrienoyl)-sn-glycero-3-phosphocholine + H2O = (9Z,12Z,15Z)-octadecatrienoate + 1-octadecanoyl-sn-glycero-3-phosphocholine + H(+). It catalyses the reaction 1-(5Z,8Z,11Z,14Z-eicosatetraenoyl)-2-hexadecanoyl-sn-glycero-3-phosphocholine + H2O = 1-(5Z,8Z,11Z,14Z-eicosatetraenoyl)-sn-glycero-3-phosphocholine + hexadecanoate + H(+). The enzyme catalyses 1-O-hexadecyl-2-(5Z,8Z,11Z,14Z)-eicosatetraenoyl-sn-glycero-3-phosphocholine + H2O = 1-O-hexadecyl-sn-glycero-3-phosphocholine + (5Z,8Z,11Z,14Z)-eicosatetraenoate + H(+). It carries out the reaction 1,2-di-(9Z-octadecenoyl)-sn-glycero-3-phospho-(1'-sn-glycerol) + H2O = 1-(9Z-octadecenoyl)-sn-glycero-3-phospho-(1'-sn-glycerol) + (9Z)-octadecenoate + H(+). The catalysed reaction is 1-octadecanoyl-2-(5Z,8Z,11Z,14Z-eicosatetraenoyl)-sn-glycero-3-phosphate + H2O = 1-octadecanoyl-sn-glycero-3-phosphate + (5Z,8Z,11Z,14Z)-eicosatetraenoate + H(+). It catalyses the reaction 1-hexadecanoyl-sn-glycero-3-phosphocholine + H2O = sn-glycerol 3-phosphocholine + hexadecanoate + H(+). The enzyme catalyses 2-(prostaglandin E2)-sn-glycero-3-phosphoethanolamine + H2O = sn-glycero-3-phosphoethanolamine + prostaglandin E2 + H(+). It carries out the reaction 2-[(15S)-hydroxy-(5Z,8Z,11Z,13E)-eicosatetraenoyl]-sn-glycero-3-phosphocholine + H2O = (15S)-hydroxy-(5Z,8Z,11Z,13E)-eicosatetraenoate + sn-glycerol 3-phosphocholine + H(+). The catalysed reaction is 2-[(15R)-hydroxy-(5Z,8Z,11Z,13E)-eicosatetraenoyl]-sn-glycero-3-phosphocholine + H2O = (15R)-hydroxy-(5Z,8Z,11Z,13E)-eicosatetraenoate + sn-glycerol 3-phosphocholine + H(+). It catalyses the reaction 2-(prostaglandin E2)-sn-glycero-3-phosphocholine + H2O = prostaglandin E2 + sn-glycerol 3-phosphocholine + H(+). The enzyme catalyses 2-[(11R)-hydroxy-(5Z,8Z,12E,14Z)-eicosatetraenoyl]-sn-glycero-3-phosphocholine + H2O = (11R)-hydroxy-(5Z,8Z,12E,14Z)-eicosatetraenoate + sn-glycerol 3-phosphocholine + H(+). It carries out the reaction 1-(5Z,8Z,11Z,14Z-eicosatetraenoyl)-2-O-hexadecyl-sn-glycero-3-phosphocholine + H2O = 2-O-hexadecyl-sn-glycero-3-phosphocholine + (5Z,8Z,11Z,14Z)-eicosatetraenoate + H(+). The catalysed reaction is 1-octadecanoyl-2-(5Z,8Z,11Z,14Z-eicosatetraenoyl)-sn-glycero-3-phosphocholine + glycerol = 1-(5Z,8Z,11Z,14Z-eicosatetraenoyl)-glycerol + 1-octadecanoyl-sn-glycero-3-phosphocholine. It catalyses the reaction 1-octadecanoyl-2-(9Z,12Z,15Z-octadecatrienoyl)-sn-glycero-3-phosphocholine + glycerol = 1-(9Z,12Z,15Z-octadecatrienoyl)-glycerol + 1-octadecanoyl-sn-glycero-3-phosphocholine. It participates in membrane lipid metabolism; glycerophospholipid metabolism. Its pathway is lipid metabolism; arachidonate metabolism. The protein operates within lipid metabolism; prostaglandin biosynthesis. It functions in the pathway lipid metabolism; leukotriene B4 biosynthesis. Activated by cytosolic calcium, which is necessary for binding to membrane lipids. Activated by phosphorylation in response to mitogenic stimuli. Functionally, has primarily calcium-dependent phospholipase and lysophospholipase activities, with a major role in membrane lipid remodeling and biosynthesis of lipid mediators of the inflammatory response. Plays an important role in embryo implantation and parturition through its ability to trigger prostanoid production. Preferentially hydrolyzes the ester bond of the fatty acyl group attached at sn-2 position of phospholipids (phospholipase A2 activity). Selectively hydrolyzes sn-2 arachidonoyl group from membrane phospholipids, providing the precursor for eicosanoid biosynthesis via the cyclooxygenase pathway. In an alternative pathway of eicosanoid biosynthesis, hydrolyzes sn-2 fatty acyl chain of eicosanoid lysophopholipids to release free bioactive eicosanoids. Hydrolyzes the ester bond of the fatty acyl group attached at sn-1 position of phospholipids (phospholipase A1 activity) only if an ether linkage rather than an ester linkage is present at the sn-2 position. This hydrolysis is not stereospecific. Has calcium-independent phospholipase A2 and lysophospholipase activities in the presence of phosphoinositides. Has O-acyltransferase activity. Catalyzes the transfer of fatty acyl chains from phospholipids to a primary hydroxyl group of glycerol (sn-1 or sn-3), potentially contributing to monoacylglycerol synthesis. In Bos taurus (Bovine), this protein is Cytosolic phospholipase A2 (PLA2G4A).